Consider the following 42-residue polypeptide: Perlinhibin-related protein (42 aa).

In terms of processing, contains four disulfide bonds.

In terms of biological role, inhibitor of shell growth. The chain is Perlinhibin-related protein from Haliotis laevigata (Smooth Australian abalone).